We begin with the raw amino-acid sequence, 302 residues long: tRNA-cytidine(32) 2-sulfurtransferase (302 aa).

The PP-loop motif signature appears at 57-62 (SGGKDS). Residues Cys-132, Cys-135, and Cys-223 each coordinate [4Fe-4S] cluster.

It belongs to the TtcA family. Homodimer. It depends on Mg(2+) as a cofactor. [4Fe-4S] cluster serves as cofactor.

The protein localises to the cytoplasm. The catalysed reaction is cytidine(32) in tRNA + S-sulfanyl-L-cysteinyl-[cysteine desulfurase] + AH2 + ATP = 2-thiocytidine(32) in tRNA + L-cysteinyl-[cysteine desulfurase] + A + AMP + diphosphate + H(+). It participates in tRNA modification. Its function is as follows. Catalyzes the ATP-dependent 2-thiolation of cytidine in position 32 of tRNA, to form 2-thiocytidine (s(2)C32). The sulfur atoms are provided by the cysteine/cysteine desulfurase (IscS) system. This is tRNA-cytidine(32) 2-sulfurtransferase from Marinobacter nauticus (strain ATCC 700491 / DSM 11845 / VT8) (Marinobacter aquaeolei).